The sequence spans 87 residues: Large ribosomal subunit protein bL31B (87 aa).

This sequence belongs to the bacterial ribosomal protein bL31 family. Type B subfamily. Part of the 50S ribosomal subunit.

The protein is Large ribosomal subunit protein bL31B of Staphylococcus carnosus (strain TM300).